The chain runs to 945 residues: Isoleucine--tRNA ligase (945 aa).

Residues 66-76 carry the 'HIGH' region motif; the sequence is PYANGDIHLGH. Position 581 (E581) interacts with L-isoleucyl-5'-AMP. Residues 622 to 626 carry the 'KMSKS' region motif; that stretch reads KMSKS. K625 lines the ATP pocket. Zn(2+)-binding residues include C908, C911, C928, and C931.

Belongs to the class-I aminoacyl-tRNA synthetase family. IleS type 1 subfamily. In terms of assembly, monomer. It depends on Zn(2+) as a cofactor.

It is found in the cytoplasm. It carries out the reaction tRNA(Ile) + L-isoleucine + ATP = L-isoleucyl-tRNA(Ile) + AMP + diphosphate. In terms of biological role, catalyzes the attachment of isoleucine to tRNA(Ile). As IleRS can inadvertently accommodate and process structurally similar amino acids such as valine, to avoid such errors it has two additional distinct tRNA(Ile)-dependent editing activities. One activity is designated as 'pretransfer' editing and involves the hydrolysis of activated Val-AMP. The other activity is designated 'posttransfer' editing and involves deacylation of mischarged Val-tRNA(Ile). The sequence is that of Isoleucine--tRNA ligase from Burkholderia cenocepacia (strain HI2424).